Here is a 525-residue protein sequence, read N- to C-terminus: UPF0288 protein MA_3997 (525 aa).

This sequence belongs to the UPF0288 family.

The sequence is that of UPF0288 protein MA_3997 from Methanosarcina acetivorans (strain ATCC 35395 / DSM 2834 / JCM 12185 / C2A).